The chain runs to 207 residues: Small ribosomal subunit protein uS4 (207 aa).

The interval 31-54 is disordered; sequence KCKLDSKPGQHGRTSGARTSDYGN. Over residues 42–53 the composition is skewed to polar residues; sequence GRTSGARTSDYG. The S4 RNA-binding domain occupies 97 to 160; the sequence is SRLDNVVYRM…KKQVRIAEAL (64 aa).

This sequence belongs to the universal ribosomal protein uS4 family. Part of the 30S ribosomal subunit. Contacts protein S5. The interaction surface between S4 and S5 is involved in control of translational fidelity.

Functionally, one of the primary rRNA binding proteins, it binds directly to 16S rRNA where it nucleates assembly of the body of the 30S subunit. Its function is as follows. With S5 and S12 plays an important role in translational accuracy. In Cupriavidus metallidurans (strain ATCC 43123 / DSM 2839 / NBRC 102507 / CH34) (Ralstonia metallidurans), this protein is Small ribosomal subunit protein uS4.